A 692-amino-acid polypeptide reads, in one-letter code: Threonine--tRNA ligase (692 aa).

Residues Ala-2–Thr-59 form the TGS domain. The catalytic stretch occupies residues Asp-255–Pro-561. Zn(2+)-binding residues include Cys-360, His-411, and His-538.

It belongs to the class-II aminoacyl-tRNA synthetase family. As to quaternary structure, homodimer. Zn(2+) serves as cofactor.

Its subcellular location is the cytoplasm. It catalyses the reaction tRNA(Thr) + L-threonine + ATP = L-threonyl-tRNA(Thr) + AMP + diphosphate + H(+). Catalyzes the attachment of threonine to tRNA(Thr) in a two-step reaction: L-threonine is first activated by ATP to form Thr-AMP and then transferred to the acceptor end of tRNA(Thr). Also edits incorrectly charged L-seryl-tRNA(Thr). This Bifidobacterium animalis subsp. lactis (strain AD011) protein is Threonine--tRNA ligase.